We begin with the raw amino-acid sequence, 475 residues long: Ribulose bisphosphate carboxylase large chain (475 aa).

The propeptide occupies 1-2 (MS). Proline 3 carries the post-translational modification N-acetylproline. Position 14 is an N6,N6,N6-trimethyllysine (lysine 14). 2 residues coordinate substrate: asparagine 123 and threonine 173. The active-site Proton acceptor is lysine 175. Lysine 177 serves as a coordination point for substrate. Lysine 201, aspartate 203, and glutamate 204 together coordinate Mg(2+). Lysine 201 bears the N6-carboxylysine mark. Histidine 294 acts as the Proton acceptor in catalysis. Substrate is bound by residues arginine 295, histidine 327, and serine 379.

It belongs to the RuBisCO large chain family. Type I subfamily. As to quaternary structure, heterohexadecamer of 8 large chains and 8 small chains; disulfide-linked. The disulfide link is formed within the large subunit homodimers. Mg(2+) is required as a cofactor. The disulfide bond which can form in the large chain dimeric partners within the hexadecamer appears to be associated with oxidative stress and protein turnover.

It localises to the plastid. It is found in the chloroplast. The catalysed reaction is 2 (2R)-3-phosphoglycerate + 2 H(+) = D-ribulose 1,5-bisphosphate + CO2 + H2O. It catalyses the reaction D-ribulose 1,5-bisphosphate + O2 = 2-phosphoglycolate + (2R)-3-phosphoglycerate + 2 H(+). Functionally, ruBisCO catalyzes two reactions: the carboxylation of D-ribulose 1,5-bisphosphate, the primary event in carbon dioxide fixation, as well as the oxidative fragmentation of the pentose substrate in the photorespiration process. Both reactions occur simultaneously and in competition at the same active site. This is Ribulose bisphosphate carboxylase large chain from Adiantum capillus-veneris (Maidenhair fern).